Here is a 311-residue protein sequence, read N- to C-terminus: E3 ubiquitin-protein ligase RNF126 (311 aa).

N-acetylalanine is present on Ala-2. Ser-5 bears the Phosphoserine mark. Residues 5–100 (SPHPGRYFCH…FEIPTFPPGA (96 aa)) are required for interaction with BAG6. Residues Cys-13, Cys-16, Cys-29, and Cys-32 each contribute to the Zn(2+) site. The C4-type zinc finger occupies 13-32 (CHCCSVEIVPRLPDYICPRC). 2 disordered regions span residues 42–64 (EETR…SRPP) and 94–132 (PTFP…ARLT). Residues 47–61 (TENGSAPSTAPTDQS) are compositionally biased toward polar residues. A compositionally biased stretch (basic and acidic residues) spans 103-116 (DDGRDPESRRERDH). Residues 117 to 132 (PSRHRYGARQPRARLT) show a composition bias toward basic residues. A sufficient for interaction with AICDA region spans residues 200–304 (TGPPPADKEK…SSSSSSSPSN (105 aa)). The RING-type zinc finger occupies 229–270 (CPVCKDDYALGERVRQLPCNHLFHDGCIVPWLEQHDSCPVCR). Residues 277–311 (NTATNPPGLTGVSFSSSSSSSSSSSPSNENATSNS) are disordered. Low complexity predominate over residues 289–311 (SFSSSSSSSSSSSPSNENATSNS).

Interacts with CCDC50, EGFR, FLT3 and SCAMP3. Interacts with BAG6 (via ubiquitin-like domain); required for BAG6-dependent ubiquitination of proteins mislocalized to the cytosol. Interacts with CDKN1A. Interacts with AICDA. Post-translationally, ubiquitinated. May undergo autoubiquitination. As to expression, highly expressed in liver and testis.

It localises to the cytoplasm. The protein resides in the nucleus. The catalysed reaction is S-ubiquitinyl-[E2 ubiquitin-conjugating enzyme]-L-cysteine + [acceptor protein]-L-lysine = [E2 ubiquitin-conjugating enzyme]-L-cysteine + N(6)-ubiquitinyl-[acceptor protein]-L-lysine.. The protein operates within protein modification; protein ubiquitination. Its function is as follows. E3 ubiquitin-protein ligase that mediates ubiquitination oF target proteins. Depending on the associated E2 ligase, mediates 'Lys-27'-, 'Lys-29'-, 'Lys-48'- and/or 'Lys-63'-linked polyubiquitination of substrates. Part of a BAG6-dependent quality control process ensuring that proteins of the secretory pathway that are mislocalized to the cytosol are degraded by the proteasome. Probably acts by providing the ubiquitin ligase activity associated with the BAG6 complex and be responsible for ubiquitination of the hydrophobic mislocalized proteins and their targeting to the proteasome. May also play a role in the endosomal recycling of IGF2R, the cation-independent mannose-6-phosphate receptor. May play a role in the endosomal sorting and degradation of several membrane receptors including EGFR, FLT3, MET and CXCR4, by mediating their ubiquitination. By ubiquitinating CDKN1A/p21 and targeting it for degradation, may also promote cell proliferation. May monoubiquitinate AICDA. Acts as a regulator of DNA repair by mediating 'Lys-27'- and 'Lys-29'-linked polyubiquitination of MRE11, thereby promoting the exonuclease activity of MRE11. The protein is E3 ubiquitin-protein ligase RNF126 of Homo sapiens (Human).